We begin with the raw amino-acid sequence, 365 residues long: Fucose-specific lectin (365 aa).

A signal peptide spans 1-21; that stretch reads MKLLHFTILLQVSLFPASSLA. Tandem repeats lie at residues 22–79, 80–141, 142–206, 207–261, 262–309, and 310–365. Residues 22–365 form a 6 X approximate tandem repeats region; sequence QAGGNNTEVQ…RRGILAIPPA (344 aa). An N-linked (GlcNAc...) asparagine glycan is attached at asparagine 26. Residues arginine 51, glutamate 63, and tryptophan 70 each coordinate beta-L-fucose. N-linked (GlcNAc...) asparagine glycosylation is found at asparagine 76 and asparagine 85. Position 111 (arginine 111) interacts with beta-L-fucose. N-linked (GlcNAc...) asparagine glycosylation occurs at asparagine 118. Beta-L-fucose is bound by residues glutamate 123, tryptophan 132, arginine 164, glutamate 176, tryptophan 201, and arginine 231. Asparagine 248 is a glycosylation site (N-linked (GlcNAc...) asparagine). The beta-L-fucose site is built by arginine 283, arginine 333, and glutamate 347.

Belongs to the fungal fucose-specific lectin family. As to quaternary structure, homodimer.

Its subcellular location is the secreted. Probable L-fucose-binding lectin. This is Fucose-specific lectin from Arthroderma benhamiae (strain ATCC MYA-4681 / CBS 112371) (Trichophyton mentagrophytes).